The chain runs to 144 residues: Cysteine desulfuration protein SufE (144 aa).

The active-site Cysteine persulfide intermediate is Cys-51.

This sequence belongs to the SufE family. As to quaternary structure, homodimer. Interacts with SufS.

It is found in the cytoplasm. It functions in the pathway cofactor biosynthesis; iron-sulfur cluster biosynthesis. Its function is as follows. Participates in cysteine desulfuration mediated by SufS. Cysteine desulfuration mobilizes sulfur from L-cysteine to yield L-alanine and constitutes an essential step in sulfur metabolism for biosynthesis of a variety of sulfur-containing biomolecules. Functions as a sulfur acceptor for SufS, by mediating the direct transfer of the sulfur atom from the S-sulfanylcysteine of SufS, an intermediate product of cysteine desulfuration process. This is Cysteine desulfuration protein SufE from Wigglesworthia glossinidia brevipalpis.